The following is a 1910-amino-acid chain: Endoribonuclease dcr-1 (1910 aa).

The 182-residue stretch at 20 to 201 (LLDKATKKNT…KLMEQLKKLE (182 aa)) folds into the Helicase ATP-binding domain. 33–40 (LGTGSGKT) serves as a coordination point for ATP. The DEAH box signature appears at 145–148 (DECH). One can recognise a Helicase C-terminal domain in the interval 371–542 (EFQKERMKLE…TVNNPIEDDS (172 aa)). Residues 571–667 (AIALINRYCS…LPKGRESIAK (97 aa)) form the Dicer dsRNA-binding fold domain. In terms of domain architecture, PAZ spans 845 to 1003 (YVSEVVANME…LVPELMDIHP (159 aa)). Disordered stretches follow at residues 951–988 (RIQN…VPHS), 1227–1248 (TASS…KQLT), and 1272–1309 (LEMS…PTNF). Composition is skewed to polar residues over residues 970–988 (IPQA…VPHS) and 1227–1245 (TASS…SPPK). Residues 1245-1280 (KQLTKEEEQFKKLQNDLLKQAKERLEALEMSEDMEK) adopt a coiled-coil conformation. Positions 1272-1286 (LEMSEDMEKPRRLED) are enriched in basic and acidic residues. Over residues 1288–1304 (VNLEDYGDDQENQEDEN) the composition is skewed to acidic residues. 2 RNase III domains span residues 1381-1589 (VSHI…LTLG) and 1643-1805 (FTQL…LDSG). 3 residues coordinate Mg(2+): E1682, D1791, and E1794. Residues 1833 to 1896 (SPIRELMEFE…AKRALKYLHQ (64 aa)) form the DRBM domain.

It belongs to the helicase family. Dicer subfamily. Component of the ERI/DICER complex at least composed of dcr-1, rrf-3 and eri-1. Interacts with pir-1. The cofactor is Mg(2+). Mn(2+) serves as cofactor.

In terms of biological role, component of the ERI/DICER complex which is involved in processing amplified double-stranded RNA (dsRNA) intermediates during small-RNA-mediated gene-silencing or RNA interference (RNAi). Involved in cleaving dsRNA in the RNAi pathway. It produces 21 to 23 bp dsRNAs (siRNAs) which target the selective destruction of homologous RNAs. Seems to process the precursor of the small temporal RNA let-7 which is involved in developmental timing. Required for avoidance behavior induced by small RNAs derived from pathogenic bacteria such as P.aeruginosa. Involved in innate immunity through its role in small RNA processing. Its function is as follows. tDCR-1 acts as a deoxyribonuclease (DNase) initiating DNA fragmentation during apoptosis, upstream of nucleases cps-6, crn-2 and nuc-1. The protein is Endoribonuclease dcr-1 of Caenorhabditis elegans.